A 383-amino-acid chain; its full sequence is Lipid-A-disaccharide synthase (383 aa).

It belongs to the LpxB family.

It catalyses the reaction a lipid X + a UDP-2-N,3-O-bis[(3R)-3-hydroxyacyl]-alpha-D-glucosamine = a lipid A disaccharide + UDP + H(+). It participates in bacterial outer membrane biogenesis; LPS lipid A biosynthesis. In terms of biological role, condensation of UDP-2,3-diacylglucosamine and 2,3-diacylglucosamine-1-phosphate to form lipid A disaccharide, a precursor of lipid A, a phosphorylated glycolipid that anchors the lipopolysaccharide to the outer membrane of the cell. The polypeptide is Lipid-A-disaccharide synthase (Aliivibrio fischeri (strain MJ11) (Vibrio fischeri)).